The sequence spans 503 residues: TGF-beta receptor type-1 (503 aa).

The N-terminal stretch at 1–29 (MEVAAGAPRSRLLLFVLAATATLAPEATA) is a signal peptide. Residues 30–126 (FQCFCHLCTK…PPSGLGPVEL (97 aa)) lie on the Extracellular side of the membrane. 5 cysteine pairs are disulfide-bonded: cysteine 32–cysteine 50, cysteine 34–cysteine 37, cysteine 44–cysteine 67, cysteine 82–cysteine 96, and cysteine 97–cysteine 102. A glycan (N-linked (GlcNAc...) asparagine) is linked at asparagine 41. Residues 127 to 147 (AAVIAGPVCFVCISLMLMVYI) traverse the membrane as a helical segment. At 148 to 503 (CHNRTVIHHR…QLSQQEGIKM (356 aa)) the chain is on the cytoplasmic side. A Phosphoserine modification is found at serine 165. The region spanning 175–204 (TTLKDLIYDMTTSGSGSGLPLLVQRTIART) is the GS domain. Residues threonine 185 and threonine 186 each carry the phosphothreonine; by TGFBR2 modification. 3 positions are modified to phosphoserine; by TGFBR2: serine 187, serine 189, and serine 191. The FKBP1A-binding motif lies at 193 to 194 (LP). A Protein kinase domain is found at 205–495 (IVLQESIGKG…LRIKKTLSQL (291 aa)). ATP-binding positions include 211-219 (IGKGRFGEV) and lysine 232. The active-site Proton acceptor is the aspartate 333. Lysine 391 participates in a covalent cross-link: Glycyl lysine isopeptide (Lys-Gly) (interchain with G-Cter in SUMO).

It belongs to the protein kinase superfamily. TKL Ser/Thr protein kinase family. TGFB receptor subfamily. In terms of assembly, homodimer; in the endoplasmic reticulum but also at the cell membrane. Heterohexamer; TGFB1, TGFB2 and TGFB3 homodimeric ligands assemble a functional receptor composed of two TGFBR1 and TGFBR2 heterodimers to form a ligand-receptor heterohexamer. The respective affinity of TGBRB1 and TGFBR2 for the ligands may modulate the kinetics of assembly of the receptor and may explain the different biological activities of TGFB1, TGFB2 and TGFB3. Component of a complex composed of TSC22D1 (via N-terminus), TGFBR1 and TGFBR2; the interaction between TSC22D1 and TGFBR1 is inhibited by SMAD7 and promoted by TGFB1. Interacts with CD109; inhibits TGF-beta receptor activation in keratinocytes. Interacts with RBPMS. Interacts (unphosphorylated) with FKBP1A; prevents TGFBR1 phosphorylation by TGFBR2 and stabilizes it in the inactive conformation. Interacts with SMAD2, SMAD3 and ZFYVE9; ZFYVE9 recruits SMAD2 and SMAD3 to the TGF-beta receptor. Interacts with TRAF6 and MAP3K7; induces MAP3K7 activation by TRAF6. Interacts with PARD6A; involved in TGF-beta induced epithelial to mesenchymal transition. Interacts with NEDD4L. Interacts with SMAD7, SMURF1 and SMURF2; SMAD7 recruits NEDD4L, SMURF1 and SMURF2 to the TGF-beta receptor. Interacts with USP15 and VPS39. Interacts with SDCBP (via C-terminus). Interacts with CAV1 and this interaction is impaired in the presence of SDCBP. Interacts with APPL1; interaction is TGF beta dependent; mediates trafficking of the TGFBR1 from the endosomes to the nucleus via microtubules in a TRAF6-dependent manner. Interacts with GPR50; this interaction promotes the constitutive activation of SMAD signaling pathway. The cofactor is Mg(2+). It depends on Mn(2+) as a cofactor. Post-translationally, phosphorylated at basal levels in the absence of ligand. Activated upon phosphorylation by TGFBR2, mainly in the GS domain. Phosphorylation in the GS domain abrogates FKBP1A-binding. In terms of processing, N-Glycosylated. Ubiquitinated; undergoes ubiquitination catalyzed by several E3 ubiquitin ligases including SMURF1, SMURF2 and NEDD4L2. Results in the proteasomal and/or lysosomal degradation of the receptor thereby negatively regulating its activity. Deubiquitinated by USP15, leading to stabilization of the protein and enhanced TGF-beta signal. Its ubiquitination and proteasome-mediated degradation is negatively regulated by SDCBP.

The protein localises to the cell membrane. It is found in the cell junction. It localises to the tight junction. Its subcellular location is the membrane raft. The protein resides in the cell surface. The enzyme catalyses L-threonyl-[receptor-protein] + ATP = O-phospho-L-threonyl-[receptor-protein] + ADP + H(+). It catalyses the reaction L-seryl-[receptor-protein] + ATP = O-phospho-L-seryl-[receptor-protein] + ADP + H(+). Its activity is regulated as follows. Kept in an inactive conformation by FKBP1A preventing receptor activation in absence of ligand. CD109 is another inhibitor of the receptor. Its function is as follows. Transmembrane serine/threonine kinase forming with the TGF-beta type II serine/threonine kinase receptor, TGFBR2, the non-promiscuous receptor for the TGF-beta cytokines TGFB1, TGFB2 and TGFB3. Transduces the TGFB1, TGFB2 and TGFB3 signal from the cell surface to the cytoplasm and is thus regulating a plethora of physiological and pathological processes including cell cycle arrest in epithelial and hematopoietic cells, control of mesenchymal cell proliferation and differentiation, wound healing, extracellular matrix production, immunosuppression and carcinogenesis. The formation of the receptor complex composed of 2 TGFBR1 and 2 TGFBR2 molecules symmetrically bound to the cytokine dimer results in the phosphorylation and the activation of TGFBR1 by the constitutively active TGFBR2. Activated TGFBR1 phosphorylates SMAD2 which dissociates from the receptor and interacts with SMAD4. The SMAD2-SMAD4 complex is subsequently translocated to the nucleus where it modulates the transcription of the TGF-beta-regulated genes. This constitutes the canonical SMAD-dependent TGF-beta signaling cascade. Also involved in non-canonical, SMAD-independent TGF-beta signaling pathways. For instance, TGFBR1 induces TRAF6 autoubiquitination which in turn results in MAP3K7 ubiquitination and activation to trigger apoptosis. Also regulates epithelial to mesenchymal transition through a SMAD-independent signaling pathway through PARD6A phosphorylation and activation. This chain is TGF-beta receptor type-1 (TGFBR1), found in Sus scrofa (Pig).